The chain runs to 186 residues: ATP synthase subunit delta (186 aa).

This sequence belongs to the ATPase delta chain family. In terms of assembly, F-type ATPases have 2 components, F(1) - the catalytic core - and F(0) - the membrane proton channel. F(1) has five subunits: alpha(3), beta(3), gamma(1), delta(1), epsilon(1). F(0) has three main subunits: a(1), b(2) and c(10-14). The alpha and beta chains form an alternating ring which encloses part of the gamma chain. F(1) is attached to F(0) by a central stalk formed by the gamma and epsilon chains, while a peripheral stalk is formed by the delta and b chains.

The protein localises to the cell membrane. Functionally, f(1)F(0) ATP synthase produces ATP from ADP in the presence of a proton or sodium gradient. F-type ATPases consist of two structural domains, F(1) containing the extramembraneous catalytic core and F(0) containing the membrane proton channel, linked together by a central stalk and a peripheral stalk. During catalysis, ATP synthesis in the catalytic domain of F(1) is coupled via a rotary mechanism of the central stalk subunits to proton translocation. In terms of biological role, this protein is part of the stalk that links CF(0) to CF(1). It either transmits conformational changes from CF(0) to CF(1) or is implicated in proton conduction. The chain is ATP synthase subunit delta from Wolbachia sp. subsp. Brugia malayi (strain TRS).